The following is a 359-amino-acid chain: MVDILPHPSFLGDMGDHSKKKSGIAMCVGCGSQIHDQYILRVSPDLEWHAACLKCAECSQYLDETCTCFVRDGKTYCKRDYVRLFGIKCAKCNIGFCSSDLVMRARDNVYHMECFRCSVCSRHLLPGDEFSLRDEELLCRADHGLLMERASAGSPISPGNIHSSRPLHIPEPVPVRQPPHRNHVHKQSEKTTRVRTVLNEKQLHTLRTCYNANPRPDALMKEQLVEMTGLSPRVIRVWFQNKRCKDKKKSILMKQLQQQQHNDKTNLQGLTGTPLVAGSPIRHDTTVQGNPVEVQTYQPPWKALSEFALQSDLDQPAFQQLVSFSESGSLGNSSGSDVTSLSSQLPDTPNSMVPSPVET.

LIM zinc-binding domains lie at 27–80 (CVGC…CKRD) and 30–143 (CGSQ…RADH). The segment at 171-190 (EPVPVRQPPHRNHVHKQSEK) is disordered. Residues 191-250 (TTRVRTVLNEKQLHTLRTCYNANPRPDALMKEQLVEMTGLSPRVIRVWFQNKRCKDKKKS) constitute a DNA-binding region (homeobox). Over residues 326–336 (ESGSLGNSSGS) the composition is skewed to low complexity. The segment at 326-359 (ESGSLGNSSGSDVTSLSSQLPDTPNSMVPSPVET) is disordered. The span at 337 to 359 (DVTSLSSQLPDTPNSMVPSPVET) shows a compositional bias: polar residues.

The protein resides in the nucleus. Functionally, binds to one of the cis-acting domain of the insulin gene enhancer. May be involved in subtype specialization of primary motoneurons. The sequence is that of Insulin gene enhancer protein isl-2a (isl2a) from Danio rerio (Zebrafish).